We begin with the raw amino-acid sequence, 276 residues long: Hydroxyethylthiazole kinase (276 aa).

R126 and S172 together coordinate ATP. Position 199 (G199) interacts with substrate.

This sequence belongs to the Thz kinase family. Mg(2+) serves as cofactor.

It carries out the reaction 5-(2-hydroxyethyl)-4-methylthiazole + ATP = 4-methyl-5-(2-phosphooxyethyl)-thiazole + ADP + H(+). It functions in the pathway cofactor biosynthesis; thiamine diphosphate biosynthesis; 4-methyl-5-(2-phosphoethyl)-thiazole from 5-(2-hydroxyethyl)-4-methylthiazole: step 1/1. Catalyzes the phosphorylation of the hydroxyl group of 4-methyl-5-beta-hydroxyethylthiazole (THZ). The polypeptide is Hydroxyethylthiazole kinase (Burkholderia pseudomallei (strain 1710b)).